The sequence spans 557 residues: uncharacterized protein (557 aa).

A signal peptide spans 1 to 30 (MAPRRRRHTRIAGLRVVGTATLVAATTLTA). Cys31 carries the N-palmitoyl cysteine lipid modification. Residue Cys31 is the site of S-diacylglycerol cysteine attachment.

It to M.bovis Mb2616c and M.leprae ML0489.

It localises to the cell membrane. This is an uncharacterized protein from Mycobacterium tuberculosis (strain CDC 1551 / Oshkosh).